Consider the following 202-residue polypeptide: Small ribosomal subunit protein uS4c (202 aa).

The S4 RNA-binding domain occupies 90–153; that stretch reads MRLDNVIFRL…KSETIISKNI (64 aa).

It belongs to the universal ribosomal protein uS4 family. Part of the 30S ribosomal subunit. Contacts protein S5. The interaction surface between S4 and S5 is involved in control of translational fidelity.

The protein localises to the plastid. It localises to the chloroplast. Functionally, one of the primary rRNA binding proteins, it binds directly to 16S rRNA where it nucleates assembly of the body of the 30S subunit. In terms of biological role, with S5 and S12 plays an important role in translational accuracy. This is Small ribosomal subunit protein uS4c (rps4) from Arbusculohypopterygium arbuscula (Moss).